A 717-amino-acid chain; its full sequence is Eukaryotic translation initiation factor 3 subunit B (717 aa).

The segment at 1-89 is sufficient for interaction with HCR1 and TIF32; sequence MTVEDNLDID…VFIEYETGEM (89 aa). The segment at 1 to 216 is sufficient for interaction with PIC8; it reads MTVEDNLDID…GVQLWGGPDW (216 aa). Residues 28–115 form the RRM domain; sequence SFIVVDGAPV…HKLLVNKLSE (88 aa). WD repeat units lie at residues 183–221, 223–284, 293–332, 445–484, 506–549, and 564–609; these read RERW…PPIC, FQHP…PVRT, GASM…LLDK, ELKD…NRHT, FDKK…DRKH, and SEHY…QREE.

Belongs to the eIF-3 subunit B family. Component of the eukaryotic translation initiation factor 3 (eIF-3) complex.

It is found in the cytoplasm. In terms of biological role, RNA-binding component of the eukaryotic translation initiation factor 3 (eIF-3) complex, which is involved in protein synthesis of a specialized repertoire of mRNAs and, together with other initiation factors, stimulates binding of mRNA and methionyl-tRNAi to the 40S ribosome. The eIF-3 complex specifically targets and initiates translation of a subset of mRNAs involved in cell proliferation. The chain is Eukaryotic translation initiation factor 3 subunit B from Yarrowia lipolytica (strain CLIB 122 / E 150) (Yeast).